A 140-amino-acid chain; its full sequence is ATP synthase epsilon chain (140 aa).

It belongs to the ATPase epsilon chain family. As to quaternary structure, F-type ATPases have 2 components, CF(1) - the catalytic core - and CF(0) - the membrane proton channel. CF(1) has five subunits: alpha(3), beta(3), gamma(1), delta(1), epsilon(1). CF(0) has three main subunits: a, b and c.

The protein localises to the cell inner membrane. Its function is as follows. Produces ATP from ADP in the presence of a proton gradient across the membrane. The chain is ATP synthase epsilon chain from Marinobacter nauticus (strain ATCC 700491 / DSM 11845 / VT8) (Marinobacter aquaeolei).